We begin with the raw amino-acid sequence, 158 residues long: Phospholipase A2 AP-PLA2-II (158 aa).

The signal sequence occupies residues 1–16 (MKTFLILAMAVALAKA). Residues 17–23 (QSTDEIT) constitute a propeptide that is removed on maturation. 6 disulfide bridges follow: cysteine 51-cysteine 158, cysteine 53-cysteine 69, cysteine 68-cysteine 138, cysteine 75-cysteine 131, cysteine 85-cysteine 124, and cysteine 109-cysteine 129. Residues glycine 54 and glycine 56 each contribute to the Ca(2+) site. Histidine 72 is a catalytic residue. A Ca(2+)-binding site is contributed by aspartate 73. Residue aspartate 132 is part of the active site.

The protein belongs to the phospholipase A2 family. Group I subfamily. In terms of assembly, monomer. Ca(2+) is required as a cofactor. As to expression, expressed by the venom gland.

Its subcellular location is the secreted. The catalysed reaction is a 1,2-diacyl-sn-glycero-3-phosphocholine + H2O = a 1-acyl-sn-glycero-3-phosphocholine + a fatty acid + H(+). Functionally, starfish phospholipase A2 (PLA2) that has hemorrhagic and capillary permeability-increasing activities and hence is considered to be deeply involved in the local inflammation. Shows hemolytic activity only in the presence of phosphatidylcholine (PC). PLA2 catalyzes the calcium-dependent hydrolysis of the 2-acyl groups in 3-sn-phosphoglycerides. This chain is Phospholipase A2 AP-PLA2-II, found in Acanthaster planci (Crown-of-thorns starfish).